Reading from the N-terminus, the 180-residue chain is Decaprenylphosphoryl-5-phosphoribose phosphatase (180 aa).

4 helical membrane passes run 31–51 (ALSH…AGAL), 61–81 (LAVG…KRVV), 116–136 (VLLA…PMAL), and 139–159 (LVLG…GALV).

Belongs to the PA-phosphatase related phosphoesterase family.

The protein localises to the cell membrane. The catalysed reaction is trans,octa-cis-decaprenylphospho-beta-D-ribofuranose 5-phosphate + H2O = trans,octa-cis-decaprenylphospho-beta-D-ribofuranose + phosphate. Its pathway is cell wall biogenesis; cell wall polysaccharide biosynthesis. Functionally, phosphatase involved in the biosynthesis of decaprenylphosphoryl arabinose (DPA), which serves as the arabinose donor for the biosynthesis of arabinogalactan, the major mycobacterial cell wall polysaccharide. Catalyzes the dephosphorylation of decaprenylphosphoryl-5-phosphoribose (DPPR) to decaprenyl-phosphoribose (DPR). This chain is Decaprenylphosphoryl-5-phosphoribose phosphatase, found in Mycolicibacterium smegmatis (strain ATCC 700084 / mc(2)155) (Mycobacterium smegmatis).